A 934-amino-acid polypeptide reads, in one-letter code: Isoleucine--tRNA ligase (934 aa).

The 'HIGH' region signature appears at 58 to 68 (PYANGEIHIGH). Position 559 (glutamate 559) interacts with L-isoleucyl-5'-AMP. The short motif at 600–604 (KMSKS) is the 'KMSKS' region element. ATP is bound at residue lysine 603. Zn(2+) contacts are provided by cysteine 897, cysteine 900, cysteine 917, and cysteine 920.

The protein belongs to the class-I aminoacyl-tRNA synthetase family. IleS type 1 subfamily. In terms of assembly, monomer. Requires Zn(2+) as cofactor.

The protein localises to the cytoplasm. The enzyme catalyses tRNA(Ile) + L-isoleucine + ATP = L-isoleucyl-tRNA(Ile) + AMP + diphosphate. Functionally, catalyzes the attachment of isoleucine to tRNA(Ile). As IleRS can inadvertently accommodate and process structurally similar amino acids such as valine, to avoid such errors it has two additional distinct tRNA(Ile)-dependent editing activities. One activity is designated as 'pretransfer' editing and involves the hydrolysis of activated Val-AMP. The other activity is designated 'posttransfer' editing and involves deacylation of mischarged Val-tRNA(Ile). The chain is Isoleucine--tRNA ligase from Teredinibacter turnerae (strain ATCC 39867 / T7901).